An 83-amino-acid polypeptide reads, in one-letter code: U3-theraphotoxin-Cg1a (83 aa).

Residues 1 to 23 (MRTFTLIAILTCAVLVIFHAAAA) form the signal peptide. The propeptide occupies 24-44 (EELEAQDVIETEALATLDEER). Intrachain disulfides connect Cys-48–Cys-61, Cys-52–Cys-75, and Cys-69–Cys-80.

The protein belongs to the neurotoxin 12 (Hwtx-2) family. 03 (juruin) subfamily. Contains 3 disulfide bonds. Two different connectivities are observed in similar proteins (C1-C3, C2-C5, C4-C6 or C1-C4, C2-C5, C3-C6). Expressed by the venom gland.

The protein localises to the secreted. In terms of biological role, probable ion channel inhibitor. This is U3-theraphotoxin-Cg1a from Chilobrachys guangxiensis (Chinese earth tiger tarantula).